The following is a 41-amino-acid chain: Large ribosomal subunit protein bL36 (41 aa).

Belongs to the bacterial ribosomal protein bL36 family.

This chain is Large ribosomal subunit protein bL36, found in Dinoroseobacter shibae (strain DSM 16493 / NCIMB 14021 / DFL 12).